Consider the following 418-residue polypeptide: Mitochondrial outer membrane protein SLC25A46 (418 aa).

The interval 1–30 is disordered; sequence MHPRRPDGFDGLGYRGGARDEQGFGGAFPA. The residue at position 32 (S32) is a Phosphoserine. Residues 44 to 93 form a disordered region; that stretch reads TTPPDIPGSRNLHWGEKSPPYGVPTTSTPYEGPTEEPFSSGGGGSVQGQS. Residue T45 is modified to Phosphothreonine. One copy of the Solcar 1 repeat lies at 96–187; the sequence is QLNRFAGFGI…GIISEFTPLP (92 aa). Helical transmembrane passes span 103–123, 167–187, 202–222, 258–278, 314–334, and 382–402; these read FGIGLASLFTENVLAHPCIVL, FIVQGVTLGAEGIISEFTPLP, HLLLKSLTYVVAMPFYSASLI, LLPLLSLIFPTVLHGVLHYII, FPELIANFAASLCSDVILYPL, and VFGFYKGFGAVIIQYTLHAAV. A Solcar 2 repeat occupies 311-413; the sequence is DAYFPELIAN…QITKIIYSTL (103 aa).

Belongs to the mitochondrial carrier (TC 2.A.29) family. As to quaternary structure, associates with the mitochondrial contact site and cristae organizing system (MICOS) complex. May associate with the endoplasmic reticulum membrane protein complex (EMC).

It is found in the mitochondrion outer membrane. In terms of biological role, transmembrane protein of the mitochondrial outer membrane that controls mitochondrial organization. May regulate the assembly of the MICOS (mitochondrial contact site and cristae organizing system) complex which is essential to the biogenesis and dynamics of mitochondrial cristae, the inwards folds of the inner mitochondrial membrane. Through its interaction with the EMC (endoplasmic reticulum membrane protein complex), could regulate mitochondrial lipid homeostasis and thereby mitochondrial fission. This is Mitochondrial outer membrane protein SLC25A46 from Homo sapiens (Human).